The primary structure comprises 159 residues: Transcriptional repressor NrdR (159 aa).

A zinc finger spans residues 3-34; it reads CPKCGYNKSSVVDSRQAEEGTTIRRRRECEKC. One can recognise an ATP-cone domain in the interval 49 to 139; sequence LLVIKKDGTR…VYKSFKDVDE (91 aa).

It belongs to the NrdR family. Requires Zn(2+) as cofactor.

Negatively regulates transcription of bacterial ribonucleotide reductase nrd genes and operons by binding to NrdR-boxes. The polypeptide is Transcriptional repressor NrdR (Streptococcus agalactiae serotype Ia (strain ATCC 27591 / A909 / CDC SS700)).